The chain runs to 132 residues: Glycine cleavage system H protein (132 aa).

The region spanning 24–106 (LVRIGISAFA…HGEGWLLVVR (83 aa)) is the Lipoyl-binding domain. Lysine 65 carries the post-translational modification N6-lipoyllysine.

Belongs to the GcvH family. The glycine cleavage system is composed of four proteins: P, T, L and H. (R)-lipoate is required as a cofactor.

Its function is as follows. The glycine cleavage system catalyzes the degradation of glycine. The H protein shuttles the methylamine group of glycine from the P protein to the T protein. The sequence is that of Glycine cleavage system H protein from Prochlorococcus marinus (strain MIT 9313).